The sequence spans 225 residues: Ribonuclease 3 (225 aa).

One can recognise an RNase III domain in the interval 7-129 (MPRLCRTLGY…IIGAVYIDSG (123 aa)). Glu42 lines the Mg(2+) pocket. Asp46 is a catalytic residue. Mg(2+) contacts are provided by Asp115 and Glu118. Glu118 is a catalytic residue. A DRBM domain is found at 155–225 (DPKTLLQELL…AADALELMKR (71 aa)).

It belongs to the ribonuclease III family. In terms of assembly, homodimer. Mg(2+) is required as a cofactor.

Its subcellular location is the cytoplasm. It carries out the reaction Endonucleolytic cleavage to 5'-phosphomonoester.. Digests double-stranded RNA. Involved in the processing of primary rRNA transcript to yield the immediate precursors to the large and small rRNAs (23S and 16S). Processes some mRNAs, and tRNAs when they are encoded in the rRNA operon. Processes pre-crRNA and tracrRNA of type II CRISPR loci if present in the organism. This Shewanella sediminis (strain HAW-EB3) protein is Ribonuclease 3.